A 426-amino-acid chain; its full sequence is Tol-Pal system protein TolB (426 aa).

Positions 1–25 (MNAMSRISRRIFLALALSLAGLAQA) are cleaved as a signal peptide.

It belongs to the TolB family. As to quaternary structure, the Tol-Pal system is composed of five core proteins: the inner membrane proteins TolA, TolQ and TolR, the periplasmic protein TolB and the outer membrane protein Pal. They form a network linking the inner and outer membranes and the peptidoglycan layer.

The protein localises to the periplasm. Functionally, part of the Tol-Pal system, which plays a role in outer membrane invagination during cell division and is important for maintaining outer membrane integrity. The protein is Tol-Pal system protein TolB of Dechloromonas aromatica (strain RCB).